We begin with the raw amino-acid sequence, 195 residues long: Glycerol-3-phosphate acyltransferase (195 aa).

The next 6 helical transmembrane spans lie at 4–24, 53–73, 80–100, 110–130, 133–153, and 154–174; these read GLIL…GLLL, GLAA…VLIA, TAVW…WLGF, LGVL…IWLA, FLFR…PIAL, and YFLS…IVFI.

The protein belongs to the PlsY family. In terms of assembly, probably interacts with PlsX.

The protein resides in the cell inner membrane. The enzyme catalyses an acyl phosphate + sn-glycerol 3-phosphate = a 1-acyl-sn-glycero-3-phosphate + phosphate. The protein operates within lipid metabolism; phospholipid metabolism. In terms of biological role, catalyzes the transfer of an acyl group from acyl-phosphate (acyl-PO(4)) to glycerol-3-phosphate (G3P) to form lysophosphatidic acid (LPA). This enzyme utilizes acyl-phosphate as fatty acyl donor, but not acyl-CoA or acyl-ACP. This chain is Glycerol-3-phosphate acyltransferase, found in Mesorhizobium japonicum (strain LMG 29417 / CECT 9101 / MAFF 303099) (Mesorhizobium loti (strain MAFF 303099)).